The following is a 361-amino-acid chain: Chorismate synthase (361 aa).

NADP(+) contacts are provided by arginine 48 and arginine 54. Residues 125–127, 238–239, glycine 278, 293–297, and arginine 319 contribute to the FMN site; these read RSS, NA, and KPTSS.

The protein belongs to the chorismate synthase family. In terms of assembly, homotetramer. FMNH2 serves as cofactor.

The catalysed reaction is 5-O-(1-carboxyvinyl)-3-phosphoshikimate = chorismate + phosphate. It functions in the pathway metabolic intermediate biosynthesis; chorismate biosynthesis; chorismate from D-erythrose 4-phosphate and phosphoenolpyruvate: step 7/7. In terms of biological role, catalyzes the anti-1,4-elimination of the C-3 phosphate and the C-6 proR hydrogen from 5-enolpyruvylshikimate-3-phosphate (EPSP) to yield chorismate, which is the branch point compound that serves as the starting substrate for the three terminal pathways of aromatic amino acid biosynthesis. This reaction introduces a second double bond into the aromatic ring system. The polypeptide is Chorismate synthase (Klebsiella pneumoniae (strain 342)).